A 113-amino-acid chain; its full sequence is Protein CTLA-2-beta (113 aa).

A run of 2 repeats spans residues 15–17 (EWK) and 18–20 (EWK). The 2 X 3 AA tandem repeats of E-W-K stretch occupies residues 15–20 (EWKEWK).

To the propeptide regions of cysteine proteases.

Not known, expressed in activated T-cell. In Mus musculus (Mouse), this protein is Protein CTLA-2-beta (Ctla2b).